Here is a 156-residue protein sequence, read N- to C-terminus: Ribosomal RNA large subunit methyltransferase H (156 aa).

S-adenosyl-L-methionine is bound by residues Leu73, Gly104, and 123 to 128 (LSRLTL).

The protein belongs to the RNA methyltransferase RlmH family. Homodimer.

It is found in the cytoplasm. The catalysed reaction is pseudouridine(1915) in 23S rRNA + S-adenosyl-L-methionine = N(3)-methylpseudouridine(1915) in 23S rRNA + S-adenosyl-L-homocysteine + H(+). In terms of biological role, specifically methylates the pseudouridine at position 1915 (m3Psi1915) in 23S rRNA. In Thiobacillus denitrificans (strain ATCC 25259 / T1), this protein is Ribosomal RNA large subunit methyltransferase H.